Reading from the N-terminus, the 192-residue chain is Thymidine kinase (192 aa).

Residues 9-16 and 88-91 contribute to the ATP site; these read SAMNAGKT and DECH. The active-site Proton acceptor is Glu89. 4 residues coordinate Zn(2+): Cys146, Cys148, Cys183, and His186.

It belongs to the thymidine kinase family. In terms of assembly, homotetramer.

The protein localises to the cytoplasm. The enzyme catalyses thymidine + ATP = dTMP + ADP + H(+). The chain is Thymidine kinase from Blochmanniella floridana.